Reading from the N-terminus, the 79-residue chain is Protein AC4 (79 aa).

Disordered stretches follow at residues 1–24 (MCSYSSKANTNARITDSSIWSPQP) and 36–79 (LNPA…MPRR). The segment covering 38–47 (PAPTSSPTST) has biased composition (low complexity). Positions 48–61 (RTEIQLNGENSRST) are enriched in polar residues.

It belongs to the geminiviridae protein AC4/C4 family.

Its function is as follows. Pathogenicity determinant. May act as a suppressor of RNA-mediated gene silencing, also known as post-transcriptional gene silencing (PTGS), a mechanism of plant viral defense that limits the accumulation of viral RNAs. This Abutilon (Upland cotton) protein is Protein AC4.